The chain runs to 341 residues: Glycerol-3-phosphate dehydrogenase [NAD(P)+] 1 (341 aa).

NADPH-binding residues include Ser-17, Trp-18, Arg-37, and Lys-112. Sn-glycerol 3-phosphate contacts are provided by Lys-112 and Gly-140. Ala-144 contacts NADPH. Residues Lys-195, Asp-248, Ser-258, Arg-259, and Asn-260 each coordinate sn-glycerol 3-phosphate. The active-site Proton acceptor is Lys-195. Arg-259 is a binding site for NADPH. NADPH is bound by residues Val-283 and Glu-285.

Belongs to the NAD-dependent glycerol-3-phosphate dehydrogenase family.

It localises to the cytoplasm. It carries out the reaction sn-glycerol 3-phosphate + NAD(+) = dihydroxyacetone phosphate + NADH + H(+). The enzyme catalyses sn-glycerol 3-phosphate + NADP(+) = dihydroxyacetone phosphate + NADPH + H(+). The protein operates within membrane lipid metabolism; glycerophospholipid metabolism. Catalyzes the reduction of the glycolytic intermediate dihydroxyacetone phosphate (DHAP) to sn-glycerol 3-phosphate (G3P), the key precursor for phospholipid synthesis. This is Glycerol-3-phosphate dehydrogenase [NAD(P)+] 1 from Mycobacterium bovis (strain ATCC BAA-935 / AF2122/97).